Here is a 234-residue protein sequence, read N- to C-terminus: Probable RNA/DNA demethylase ALKBH6 (234 aa).

The Fe2OG dioxygenase domain occupies 96-222; the sequence is TANHVLVNEY…RVSLTIRHVP (127 aa). 2-oxoglutarate is bound by residues Asn103 and Tyr105. Residues His114, Asp116, and His180 each contribute to the Fe cation site. Residues Arg213 and Ser215 each coordinate 2-oxoglutarate.

The protein belongs to the alkB family. The cofactor is Fe(2+).

The protein localises to the cytoplasm. It is found in the nucleus. In terms of biological role, probable Fe(2+)/2-oxoglutarate-dependent dioxygenase involved in oxidative demethylation of nucleic acids. Binds nucleic acids with a preference for ssDNA or ssRNA to other types of DNAs. May play a role in nucleic acid damage repair. The chain is Probable RNA/DNA demethylase ALKBH6 (alkbh6) from Danio rerio (Zebrafish).